The sequence spans 181 residues: Small ribosomal subunit protein bS16 (181 aa).

The tract at residues 150–181 (KKAAEEAAKAAAEAPAEEAAPAEETATEAAAE) is disordered. Low complexity predominate over residues 158 to 181 (KAAAEAPAEEAAPAEETATEAAAE).

Belongs to the bacterial ribosomal protein bS16 family.

The protein is Small ribosomal subunit protein bS16 of Bacteroides fragilis (strain YCH46).